The sequence spans 124 residues: Large ribosomal subunit protein bL12 (124 aa).

This sequence belongs to the bacterial ribosomal protein bL12 family. In terms of assembly, homodimer. Part of the ribosomal stalk of the 50S ribosomal subunit. Forms a multimeric L10(L12)X complex, where L10 forms an elongated spine to which 2 to 4 L12 dimers bind in a sequential fashion. Binds GTP-bound translation factors.

Forms part of the ribosomal stalk which helps the ribosome interact with GTP-bound translation factors. Is thus essential for accurate translation. The chain is Large ribosomal subunit protein bL12 from Pelodictyon phaeoclathratiforme (strain DSM 5477 / BU-1).